Reading from the N-terminus, the 346-residue chain is Ferredoxin--NADP reductase 1 (346 aa).

Positions 37, 45, 49, 89, 124, 287, and 328 each coordinate FAD.

This sequence belongs to the ferredoxin--NADP reductase type 2 family. As to quaternary structure, homodimer. FAD is required as a cofactor.

It carries out the reaction 2 reduced [2Fe-2S]-[ferredoxin] + NADP(+) + H(+) = 2 oxidized [2Fe-2S]-[ferredoxin] + NADPH. In Bacillus pumilus (strain SAFR-032), this protein is Ferredoxin--NADP reductase 1.